Reading from the N-terminus, the 140-residue chain is 3-hydroxyacyl-[acyl-carrier-protein] dehydratase FabZ (140 aa).

Histidine 48 is an active-site residue.

It belongs to the thioester dehydratase family. FabZ subfamily.

Its subcellular location is the cytoplasm. It catalyses the reaction a (3R)-hydroxyacyl-[ACP] = a (2E)-enoyl-[ACP] + H2O. Involved in unsaturated fatty acids biosynthesis. Catalyzes the dehydration of short chain beta-hydroxyacyl-ACPs and long chain saturated and unsaturated beta-hydroxyacyl-ACPs. The protein is 3-hydroxyacyl-[acyl-carrier-protein] dehydratase FabZ of Oceanobacillus iheyensis (strain DSM 14371 / CIP 107618 / JCM 11309 / KCTC 3954 / HTE831).